Reading from the N-terminus, the 308-residue chain is Methionyl-tRNA formyltransferase (308 aa).

110–113 (SLLP) contributes to the (6S)-5,6,7,8-tetrahydrofolate binding site.

It belongs to the Fmt family.

It carries out the reaction L-methionyl-tRNA(fMet) + (6R)-10-formyltetrahydrofolate = N-formyl-L-methionyl-tRNA(fMet) + (6S)-5,6,7,8-tetrahydrofolate + H(+). Attaches a formyl group to the free amino group of methionyl-tRNA(fMet). The formyl group appears to play a dual role in the initiator identity of N-formylmethionyl-tRNA by promoting its recognition by IF2 and preventing the misappropriation of this tRNA by the elongation apparatus. The chain is Methionyl-tRNA formyltransferase from Mycobacterium sp. (strain KMS).